The following is a 320-amino-acid chain: Lipoyl synthase (320 aa).

C67, C72, C78, C93, C97, C100, and S307 together coordinate [4Fe-4S] cluster. The region spanning F79 to E296 is the Radical SAM core domain.

This sequence belongs to the radical SAM superfamily. Lipoyl synthase family. The cofactor is [4Fe-4S] cluster.

Its subcellular location is the cytoplasm. It catalyses the reaction [[Fe-S] cluster scaffold protein carrying a second [4Fe-4S](2+) cluster] + N(6)-octanoyl-L-lysyl-[protein] + 2 oxidized [2Fe-2S]-[ferredoxin] + 2 S-adenosyl-L-methionine + 4 H(+) = [[Fe-S] cluster scaffold protein] + N(6)-[(R)-dihydrolipoyl]-L-lysyl-[protein] + 4 Fe(3+) + 2 hydrogen sulfide + 2 5'-deoxyadenosine + 2 L-methionine + 2 reduced [2Fe-2S]-[ferredoxin]. Its pathway is protein modification; protein lipoylation via endogenous pathway; protein N(6)-(lipoyl)lysine from octanoyl-[acyl-carrier-protein]: step 2/2. Catalyzes the radical-mediated insertion of two sulfur atoms into the C-6 and C-8 positions of the octanoyl moiety bound to the lipoyl domains of lipoate-dependent enzymes, thereby converting the octanoylated domains into lipoylated derivatives. This Mannheimia succiniciproducens (strain KCTC 0769BP / MBEL55E) protein is Lipoyl synthase.